The sequence spans 899 residues: Valine--tRNA ligase (899 aa).

The 'HIGH' region motif lies at 58–68 (PNVTGVLHIGH). The 'KMSKS' region motif lies at 544–548 (KMSKS). Residue Lys-547 coordinates ATP. Residues 836–898 (GTRLHNQRQK…NAELIALGLQ (63 aa)) adopt a coiled-coil conformation.

This sequence belongs to the class-I aminoacyl-tRNA synthetase family. ValS type 1 subfamily. In terms of assembly, monomer.

Its subcellular location is the cytoplasm. It catalyses the reaction tRNA(Val) + L-valine + ATP = L-valyl-tRNA(Val) + AMP + diphosphate. Functionally, catalyzes the attachment of valine to tRNA(Val). As ValRS can inadvertently accommodate and process structurally similar amino acids such as threonine, to avoid such errors, it has a 'posttransfer' editing activity that hydrolyzes mischarged Thr-tRNA(Val) in a tRNA-dependent manner. This Helicobacter hepaticus (strain ATCC 51449 / 3B1) protein is Valine--tRNA ligase.